A 351-amino-acid polypeptide reads, in one-letter code: Ribonucleoside-diphosphate reductase subunit M2 B (351 aa).

The interval 1-31 is disordered; it reads MGDPERPEAAGLDQDERSSSDTNENEIKSNE. Fe cation contacts are provided by aspartate 100, glutamate 131, and histidine 134. Tyrosine 138 is a catalytic residue. Residues glutamate 194, glutamate 228, and histidine 231 each coordinate Fe cation.

It belongs to the ribonucleoside diphosphate reductase small chain family. In terms of assembly, heterotetramer with large (RRM1) subunit. Interacts with p53/TP53. Interacts with RRM1 in response to DNA damage. The cofactor is Fe cation.

It localises to the cytoplasm. The protein resides in the nucleus. It catalyses the reaction a 2'-deoxyribonucleoside 5'-diphosphate + [thioredoxin]-disulfide + H2O = a ribonucleoside 5'-diphosphate + [thioredoxin]-dithiol. In terms of biological role, plays a pivotal role in cell survival by repairing damaged DNA in a p53/TP53-dependent manner. Supplies deoxyribonucleotides for DNA repair in cells arrested at G1 or G2. Contains an iron-tyrosyl free radical center required for catalysis. Forms an active ribonucleotide reductase (RNR) complex with RRM1 which is expressed both in resting and proliferating cells in response to DNA damage. The chain is Ribonucleoside-diphosphate reductase subunit M2 B (RRM2B) from Pongo abelii (Sumatran orangutan).